A 468-amino-acid chain; its full sequence is ATP synthase subunit beta (468 aa).

ATP is bound at residue 148–155 (GGAGVGKT).

This sequence belongs to the ATPase alpha/beta chains family. F-type ATPases have 2 components, CF(1) - the catalytic core - and CF(0) - the membrane proton channel. CF(1) has five subunits: alpha(3), beta(3), gamma(1), delta(1), epsilon(1). CF(0) has three main subunits: a(1), b(2) and c(9-12). The alpha and beta chains form an alternating ring which encloses part of the gamma chain. CF(1) is attached to CF(0) by a central stalk formed by the gamma and epsilon chains, while a peripheral stalk is formed by the delta and b chains.

The protein resides in the cell inner membrane. The enzyme catalyses ATP + H2O + 4 H(+)(in) = ADP + phosphate + 5 H(+)(out). In terms of biological role, produces ATP from ADP in the presence of a proton gradient across the membrane. The catalytic sites are hosted primarily by the beta subunits. The chain is ATP synthase subunit beta from Xanthomonas oryzae pv. oryzae (strain KACC10331 / KXO85).